We begin with the raw amino-acid sequence, 181 residues long: Protein GrpE (181 aa).

A compositionally biased stretch (polar residues) spans 1-10; it reads MENTQENPAT. The segment at 1–33 is disordered; sequence MENTQENPATPSAEDIGSEKQAAQGAAPAAEAA. Residues 21 to 33 show a composition bias toward low complexity; sequence QAAQGAAPAAEAA.

The protein belongs to the GrpE family. As to quaternary structure, homodimer.

Its subcellular location is the cytoplasm. Its function is as follows. Participates actively in the response to hyperosmotic and heat shock by preventing the aggregation of stress-denatured proteins, in association with DnaK and GrpE. It is the nucleotide exchange factor for DnaK and may function as a thermosensor. Unfolded proteins bind initially to DnaJ; upon interaction with the DnaJ-bound protein, DnaK hydrolyzes its bound ATP, resulting in the formation of a stable complex. GrpE releases ADP from DnaK; ATP binding to DnaK triggers the release of the substrate protein, thus completing the reaction cycle. Several rounds of ATP-dependent interactions between DnaJ, DnaK and GrpE are required for fully efficient folding. The chain is Protein GrpE from Burkholderia cenocepacia (strain ATCC BAA-245 / DSM 16553 / LMG 16656 / NCTC 13227 / J2315 / CF5610) (Burkholderia cepacia (strain J2315)).